The primary structure comprises 352 residues: Phosphoribosylformylglycinamidine cyclo-ligase (352 aa).

The protein belongs to the AIR synthase family.

The protein localises to the cytoplasm. It catalyses the reaction 2-formamido-N(1)-(5-O-phospho-beta-D-ribosyl)acetamidine + ATP = 5-amino-1-(5-phospho-beta-D-ribosyl)imidazole + ADP + phosphate + H(+). It functions in the pathway purine metabolism; IMP biosynthesis via de novo pathway; 5-amino-1-(5-phospho-D-ribosyl)imidazole from N(2)-formyl-N(1)-(5-phospho-D-ribosyl)glycinamide: step 2/2. This Pseudomonas fluorescens (strain Pf0-1) protein is Phosphoribosylformylglycinamidine cyclo-ligase.